The primary structure comprises 314 residues: D-alanine--D-alanine ligase (314 aa).

Residues 115-310 (KQVWQSVGLV…FNELVLEILA (196 aa)) form the ATP-grasp domain. 141–196 (LDSLGGQGFVKPAHEGSSIGMSVVSTAQELKAAYEKAAHYDAKVLVERRIVGREFT) provides a ligand contact to ATP. Residues Asp-264, Glu-277, and Asn-279 each contribute to the Mg(2+) site.

The protein belongs to the D-alanine--D-alanine ligase family. It depends on Mg(2+) as a cofactor. Mn(2+) serves as cofactor.

Its subcellular location is the cytoplasm. It catalyses the reaction 2 D-alanine + ATP = D-alanyl-D-alanine + ADP + phosphate + H(+). It functions in the pathway cell wall biogenesis; peptidoglycan biosynthesis. Cell wall formation. The sequence is that of D-alanine--D-alanine ligase from Saccharophagus degradans (strain 2-40 / ATCC 43961 / DSM 17024).